We begin with the raw amino-acid sequence, 239 residues long: Secreted effector CFEM9 (239 aa).

The signal sequence occupies residues 1-18 (MRVLKFLSLMAMLGCTIG). In terms of domain architecture, CFEM spans 19-125 (QSGSATPGSL…DALRRREDEY (107 aa)). 4 disulfides stabilise this stretch: C43/C82, C47/C77, C57/C63, and C65/C98. Residue D60 coordinates heme. The span at 187-199 (KSATTTEATRNTV) shows a compositional bias: polar residues. Residues 187 to 216 (KSATTTEATRNTVPASTTAPSPSPQLYTGN) are disordered. G215 carries the GPI-anchor amidated glycine lipid modification. An N-linked (GlcNAc...) asparagine glycan is attached at N216. A propeptide spans 216 to 239 (NASTSRATVSLTVVLTVAAVYLVL) (removed in mature form).

Belongs to the RBT5 family.

It is found in the cell membrane. Its subcellular location is the secreted. The protein resides in the host nucleus. The protein localises to the host cell membrane. Appears to function during host infection, and may play a role in suppressing the host immune response. The sequence is that of Secreted effector CFEM9 from Marssonina brunnea f. sp. multigermtubi (strain MB_m1) (Marssonina leaf spot fungus).